The sequence spans 1431 residues: Stabilin-2 (1431 aa).

At 1-1322 the chain is on the extracellular side; it reads SLPSLLTRLE…PPTAATAAHS (1322 aa). The 129-residue stretch at 2–130 folds into the FAS1 domain; that stretch reads LPSLLTRLEQ…GVIHGLEKVL (129 aa). N-linked (GlcNAc...) asparagine glycans are attached at residues N112 and N140. The Laminin EGF-like 1 domain occupies 207-272; the sequence is PQCQACPGRG…CSCVHGRCSQ (66 aa). 18 cysteine pairs are disulfide-bonded: C212/C226, C220/C236, C238/C247, C259/C270, C263/C280, C282/C291, C300/C310, C304/C320, C322/C333, C339/C352, C346/C362, C364/C375, C381/C394, C388/C404, C406/C417, C423/C436, C430/C446, and C448/C459. N-linked (GlcNAc...) asparagine glycans are attached at residues N231 and N243. EGF-like domains are found at residues 296 to 334, 335 to 376, 377 to 418, and 419 to 460; these read TTDN…TVCT, AINA…IVCL, EINP…KVCS, and LINV…IVCR. N301 carries an N-linked (GlcNAc...) asparagine glycan. N-linked (GlcNAc...) asparagine glycosylation occurs at N329. An N-linked (GlcNAc...) asparagine glycan is attached at N437. FAS1 domains lie at 460-588 and 604-745; these read RGSI…DKLL and VLQN…DCLL. N-linked (GlcNAc...) asparagine glycosylation occurs at N607. In terms of domain architecture, Laminin EGF-like 2 spans 822-887; sequence PDCQACPGGP…SCSEHGQCDE (66 aa). 6 cysteine pairs are disulfide-bonded: C827–C841, C835–C851, C853–C862, C874–C885, C879–C895, and C897–C906. An N-linked (GlcNAc...) asparagine glycan is attached at N858. N929 is a glycosylation site (N-linked (GlcNAc...) asparagine). EGF-like domains follow at residues 947–987 and 988–1030; these read VVDF…YSCI and EIDP…VDCE. 8 cysteine pairs are disulfide-bonded: C951–C964, C958–C973, C975–C986, C992–C1006, C1000–C1016, C1018–C1029, C1085–C1154, and C1109–C1130. In terms of domain architecture, Link spans 1063–1156; the sequence is GVFHLRSPLG…SEMWDVFCYR (94 aa). N-linked (GlcNAc...) asparagine glycans are attached at residues N1145, N1161, N1233, N1249, and N1258. One can recognise an FAS1 4 domain in the interval 1176 to 1310; it reads SGNLLQVLMS…GILHIISEPL (135 aa). Residues 1323 to 1343 traverse the membrane as a helical segment; that stretch reads GLGTGIFCAVVLVTGAIALAA. Over 1344–1431 the chain is Cytoplasmic; sequence YSYFRLKQRT…QQATTVTVPR (88 aa). The segment at 1368-1378 is interaction with TMSB4X; the sequence is WLLASSSPRIS.

As to quaternary structure, interacts with GULP1, heparin, alpha-M/beta-2 integrin (ITGAM and ITGB2), and thymosin beta 4 (TMSB4X). In terms of processing, glycosylated. Post-translationally, proteolytically processed to yield a 175 kDa protein. Initially expressed in all vascular cells, including those of sinusoidal-like structures, vitellin veins, and hepatic veins or sinus venosus, in E13.5 fetal liver. The expression then progressively disappears in the portal and hepatic veins, but the expression in sinusoidals endothelial cells (SECs) is retained and becomes stronger during development.

It is found in the cytoplasm. The protein resides in the cell membrane. Its function is as follows. Phosphatidylserine receptor that enhances the engulfment of apoptotic cells. Hyaluronan receptor that binds to and mediates endocytosis of hyaluronic acid (HA). Also acts, in different species, as a primary systemic scavenger receptor for heparin (Hep), chondroitin sulfate (CS), dermatan sulfate (DS), nonglycosaminoglycan (GAG), acetylated low-density lipoprotein (AcLDL), pro-collagen propeptides and advanced glycation end products (AGE). May serve to maintain tissue integrity by supporting extracellular matrix turnover or it may contribute to maintaining fluidity of bodily liquids by resorption of hyaluronan. Counter receptor which plays an important role in lymphocyte recruitment in the hepatic vasculature. Binds to both Gram-positive and Gram-negative bacteria and may play a role in defense against bacterial infection. The proteolytically processed 175 kDa form also functions as an endocytosis receptor for heparin internalization as well as HA and CS. The polypeptide is Stabilin-2 (Rattus norvegicus (Rat)).